The primary structure comprises 39 residues: Photosystem II reaction center protein J (39 aa).

A helical transmembrane segment spans residues 7–27 (IPLWLIGTIVGILVIGLIGIY).

It belongs to the PsbJ family. PSII is composed of 1 copy each of membrane proteins PsbA, PsbB, PsbC, PsbD, PsbE, PsbF, PsbH, PsbI, PsbJ, PsbK, PsbL, PsbM, PsbT, PsbX, PsbY, PsbZ, Psb30/Ycf12, at least 3 peripheral proteins of the oxygen-evolving complex and a large number of cofactors. It forms dimeric complexes.

The protein localises to the plastid. The protein resides in the chloroplast thylakoid membrane. In terms of biological role, one of the components of the core complex of photosystem II (PSII). PSII is a light-driven water:plastoquinone oxidoreductase that uses light energy to abstract electrons from H(2)O, generating O(2) and a proton gradient subsequently used for ATP formation. It consists of a core antenna complex that captures photons, and an electron transfer chain that converts photonic excitation into a charge separation. The sequence is that of Photosystem II reaction center protein J from Welwitschia mirabilis (Tree tumbo).